The primary structure comprises 130 residues: Small ribosomal subunit protein uS11 (130 aa).

This sequence belongs to the universal ribosomal protein uS11 family. As to quaternary structure, part of the 30S ribosomal subunit. Interacts with proteins S7 and S18. Binds to IF-3.

In terms of biological role, located on the platform of the 30S subunit, it bridges several disparate RNA helices of the 16S rRNA. Forms part of the Shine-Dalgarno cleft in the 70S ribosome. This chain is Small ribosomal subunit protein uS11, found in Helicobacter hepaticus (strain ATCC 51449 / 3B1).